An 862-amino-acid chain; its full sequence is Autotaxin (862 aa).

Residues 1–27 (MARQGCFGSYQVISLFTFAIGVNLCLG) form the signal peptide. Residues 28–35 (FTASRIKR) constitute a propeptide, removed by furin. Residue asparagine 53 is glycosylated (N-linked (GlcNAc...) asparagine). SMB domains lie at 54 to 97 (TSGS…LKTA) and 98 to 142 (RGWE…GESH). 10 disulfide bridges follow: cysteine 58-cysteine 75, cysteine 62-cysteine 93, cysteine 73-cysteine 86, cysteine 79-cysteine 85, cysteine 102-cysteine 119, cysteine 107-cysteine 137, cysteine 117-cysteine 130, cysteine 123-cysteine 129, cysteine 148-cysteine 194, and cysteine 156-cysteine 350. Positions 126–128 (RGD) match the Cell attachment site motif. The tract at residues 144–501 (VDDDCEEIRV…PTFKYRTKVP (358 aa)) is phosphodiesterase domain. Zn(2+) contacts are provided by aspartate 171 and threonine 209. Catalysis depends on threonine 209, which acts as the Nucleophile. 1-(9Z-octadecenoyl)-sn-glycero-3-phosphate is bound by residues threonine 209, asparagine 230, and aspartate 311. Residues threonine 209, asparagine 230, and aspartate 311 each coordinate 1-hexadecanoyl-sn-glycero-3-phosphate. The 1-tetradecanoyl-sn-glycerol 3-phosphate site is built by threonine 209, asparagine 230, and aspartate 311. Residues aspartate 311, histidine 315, aspartate 358, and histidine 359 each contribute to the Zn(2+) site. 5 disulfides stabilise this stretch: cysteine 366/cysteine 468, cysteine 413/cysteine 805, cysteine 566/cysteine 666, cysteine 568/cysteine 651, and cysteine 774/cysteine 784. An N-linked (GlcNAc...) asparagine glycan is attached at asparagine 410. Histidine 474 serves as a coordination point for Zn(2+). Residue histidine 474 coordinates 1-(9Z-octadecenoyl)-sn-glycero-3-phosphate. Histidine 474 provides a ligand contact to 1-hexadecanoyl-sn-glycero-3-phosphate. Histidine 474 provides a ligand contact to 1-tetradecanoyl-sn-glycerol 3-phosphate. A glycan (N-linked (GlcNAc...) asparagine) is linked at asparagine 524. Residues 597 to 862 (LYGRPAVLYR…TYLHTYESEI (266 aa)) are nuclease-like domain. Residues aspartate 739, asparagine 741, asparagine 743, leucine 745, and aspartate 747 each coordinate Ca(2+). The N-linked (GlcNAc...) asparagine glycan is linked to asparagine 806. Residues 829-850 (IEHLTGLDFYRKTSRSYSEILT) form a required for secretion region.

Belongs to the nucleotide pyrophosphatase/phosphodiesterase family. It depends on Zn(2+) as a cofactor. The cofactor is Ca(2+). In terms of processing, N-glycosylation, but not furin-cleavage, plays a critical role on secretion and on lysoPLD activity. Secretion requires simultaneous glycosylation on Asn-53 and Asn-410, while probable glycosylation of Asn-410 has a preferential role on lysoPLD activity. Not O-glycosylated. Post-translationally, the interdomain disulfide bond between Cys-413 and Cys-805 is essential for catalytic activity. Expressed in brain and adipose tissue.

It localises to the secreted. It carries out the reaction a 1-O-alkyl-sn-glycero-3-phosphoethanolamine + H2O = a 1-O-alkyl-sn-glycero-3-phosphate + ethanolamine + H(+). It catalyses the reaction a 1-acyl-sn-glycero-3-phosphoethanolamine + H2O = a 1-acyl-sn-glycero-3-phosphate + ethanolamine + H(+). The catalysed reaction is 1-(9Z-octadecenoyl)-sn-glycero-3-phosphoethanolamine + H2O = 1-(9Z-octadecenoyl)-sn-glycero-3-phosphate + ethanolamine + H(+). The enzyme catalyses a 1-O-alkyl-sn-glycero-3-phosphocholine + H2O = a 1-O-alkyl-sn-glycero-3-phosphate + choline + H(+). It carries out the reaction 1-O-(9Z-octadecenyl)-sn-glycero-3-phosphocholine + H2O = 1-O-(9Z-octadecenyl)-sn-glycero-3-phosphate + choline + H(+). It catalyses the reaction 1-O-hexadecyl-sn-glycero-3-phosphocholine + H2O = 1-O-hexadecyl-sn-glycero-3-phosphate + choline + H(+). The catalysed reaction is a 1-O-(1Z-alkenyl)-sn-glycero-3-phosphocholine + H2O = a 1-O-(1Z-alkenyl)-sn-glycero-3-phosphate + choline + H(+). The enzyme catalyses a 1-acyl-sn-glycero-3-phosphocholine + H2O = a 1-acyl-sn-glycero-3-phosphate + choline + H(+). It carries out the reaction 1-dodecanoyl-sn-glycero-3-phosphocholine + H2O = 1-dodecanoyl-sn-glycerol 3-phosphate + choline + H(+). It catalyses the reaction 1-(9Z-octadecenoyl)-sn-glycero-3-phosphocholine + H2O = 1-(9Z-octadecenoyl)-sn-glycero-3-phosphate + choline + H(+). The catalysed reaction is 1-tetradecanoyl-sn-glycero-3-phosphocholine + H2O = 1-tetradecanoyl-sn-glycerol 3-phosphate + choline + H(+). The enzyme catalyses 1-decanoyl-sn-glycero-3-phosphocholine + H2O = 1-decanoyl-sn-glycero-3-phosphate + choline + H(+). It carries out the reaction 1-octadecanoyl-sn-glycero-3-phosphocholine + H2O = 1-octadecanoyl-sn-glycero-3-phosphate + choline + H(+). It catalyses the reaction 1-hexadecanoyl-sn-glycero-3-phosphocholine + H2O = 1-hexadecanoyl-sn-glycero-3-phosphate + choline + H(+). The catalysed reaction is 1-hexanoyl-sn-glycero-3-phosphocholine + H2O = 1-hexanoyl-sn-glycero-3-phosphate + choline + H(+). The enzyme catalyses 1-(9Z,12Z)-octadecadienoyl-sn-glycero-3-phosphocholine + H2O = 1-(9Z,12Z)-octadecadienoyl-sn-glycero-3-phosphate + choline + H(+). It carries out the reaction sphing-4-enine-phosphocholine + H2O = sphing-4-enine 1-phosphate + choline + H(+). It catalyses the reaction 1-(5Z,8Z,11Z,14Z-eicosatetraenoyl)-sn-glycero-3-phosphocholine + H2O = 1-(5Z,8Z,11Z,14Z-eicosatetraenoyl)-sn-glycero-3-phosphate + choline + H(+). The catalysed reaction is a 2-acyl-sn-glycero-3-phosphocholine + H2O = a 2-acyl-sn-glycerol 3-phosphate + choline + H(+). The enzyme catalyses a 1,2-diacyl-sn-glycero-3-phosphocholine + H2O = a 1,2-diacyl-sn-glycero-3-phosphate + choline + H(+). It carries out the reaction 1,2-dioctanoyl-sn-glycero-3-phosphocholine + H2O = 1,2-dioctanoyl-sn-glycero-3-phosphate + choline + H(+). It catalyses the reaction 1,2-didecanoyl-sn-glycero-3-phosphocholine + H2O = 1,2-didecanoyl-sn-glycero-3-phosphate + choline + H(+). The catalysed reaction is a 1-acyl-sn-glycero-3-phospho-L-serine + H2O = a 1-acyl-sn-glycero-3-phosphate + L-serine + H(+). The enzyme catalyses 1-(9Z-octadecenoyl)-sn-glycero-3-phospho-L-serine + H2O = 1-(9Z-octadecenoyl)-sn-glycero-3-phosphate + L-serine + H(+). It carries out the reaction a 2-acyl-sn-glycero-3-phospho-L-serine + H2O = a 2-acyl-sn-glycerol 3-phosphate + L-serine + H(+). With respect to regulation, inhibited by EDTA and EGTA. Functionally, secreted lysophospholipase D that hydrolyzes lysophospholipids to produce the signaling molecule lysophosphatidic acid (LPA) in extracellular fluids. Its major substrate is lysophosphatidylcholine. Can also act on sphingosylphosphorylcholine producing sphingosine-1-phosphate, a modulator of cell motility. Can hydrolyze, in vitro, bis-pNPP, to some extent pNP-TMP, and barely ATP. Involved in several motility-related processes such as angiogenesis and neurite outgrowth. Acts as an angiogenic factor by stimulating migration of smooth muscle cells and microtubule formation. Stimulates migration of melanoma cells, probably via a pertussis toxin-sensitive G protein. May have a role in induction of parturition. Possible involvement in cell proliferation and adipose tissue development. Required for LPA production in activated platelets, cleaves the sn-1 lysophospholipids to generate sn-1 lysophosphatidic acids containing predominantly 18:2 and 20:4 fatty acids. Shows a preference for the sn-1 to the sn-2 isomer of 1-O-alkyl-sn-glycero-3-phosphocholine (lyso-PAF). The protein is Autotaxin of Mus musculus (Mouse).